The primary structure comprises 342 residues: Phosphoribosylformylglycinamidine cyclo-ligase (342 aa).

The protein belongs to the AIR synthase family.

It localises to the cytoplasm. It carries out the reaction 2-formamido-N(1)-(5-O-phospho-beta-D-ribosyl)acetamidine + ATP = 5-amino-1-(5-phospho-beta-D-ribosyl)imidazole + ADP + phosphate + H(+). It participates in purine metabolism; IMP biosynthesis via de novo pathway; 5-amino-1-(5-phospho-D-ribosyl)imidazole from N(2)-formyl-N(1)-(5-phospho-D-ribosyl)glycinamide: step 2/2. In Staphylococcus saprophyticus subsp. saprophyticus (strain ATCC 15305 / DSM 20229 / NCIMB 8711 / NCTC 7292 / S-41), this protein is Phosphoribosylformylglycinamidine cyclo-ligase.